Consider the following 269-residue polypeptide: MGTIVDITVTKENAERFWIVIHRDNESALKLTVDQDVLLKFRLKKGMIIDDALLRDIVYADGIKKAYQQALYFLAHRMRSEQEIVEHLRKKGVVDPVIEEVLEKLRAERYVDDEAFAAAYVRTQKNTSTKGPRLIQAELERLGVPASVIEQSLVEYSFNEQVIAARSLYEKAKKQRRAESARAFLERVKQQLMRKGFSHEVIAIVLADGSGHTEEEEREALHVQAEKIRRRYAHHPRPLYEQKMRQALYRKGFSLALIDEWLRRQDDDG.

This sequence belongs to the RecX family.

It localises to the cytoplasm. In terms of biological role, modulates RecA activity. In Geobacillus thermodenitrificans (strain NG80-2), this protein is Regulatory protein RecX.